The primary structure comprises 414 residues: tRNA(Ile)-lysidine synthase (414 aa).

Residue 13-18 coordinates ATP; the sequence is SGGIDS.

This sequence belongs to the tRNA(Ile)-lysidine synthase family.

It is found in the cytoplasm. The catalysed reaction is cytidine(34) in tRNA(Ile2) + L-lysine + ATP = lysidine(34) in tRNA(Ile2) + AMP + diphosphate + H(+). Ligates lysine onto the cytidine present at position 34 of the AUA codon-specific tRNA(Ile) that contains the anticodon CAU, in an ATP-dependent manner. Cytidine is converted to lysidine, thus changing the amino acid specificity of the tRNA from methionine to isoleucine. The protein is tRNA(Ile)-lysidine synthase of Thermotoga maritima (strain ATCC 43589 / DSM 3109 / JCM 10099 / NBRC 100826 / MSB8).